The primary structure comprises 251 residues: Protein phosphatase 1 regulatory subunit 35 (251 aa).

2 disordered regions span residues 58–99 (LITV…QQTH) and 180–235 (PALA…VPRP). Basic and acidic residues predominate over residues 76 to 99 (PNKDEHGVETDREQSRECDGQQTH).

Belongs to the PPP1R35 family.

Its subcellular location is the cytoplasm. It is found in the cytoskeleton. The protein resides in the microtubule organizing center. The protein localises to the centrosome. It localises to the centriole. Functionally, during centriole duplication, may play a role in the centriole elongation by promoting the recruitment of the microtubule-binding elongation machinery, leading to the centriole to centrosome conversion. In addition may play a role in the primary cilia assembly. The chain is Protein phosphatase 1 regulatory subunit 35 from Danio rerio (Zebrafish).